We begin with the raw amino-acid sequence, 568 residues long: Estrogen receptor beta-1 (568 aa).

A modulating region spans residues 12 to 169 (SEYAEGDSSL…SLRGKADMHY (158 aa)). NR C4-type zinc fingers lie at residues 170–190 (CAVCSDYASGYHYGVWSCEGC) and 206–230 (CPATNQCTIDKNRRKSCQACRLRKC). Residues 170–235 (CAVCSDYASG…RLRKCYEVGM (66 aa)) constitute a DNA-binding region (nuclear receptor). The region spanning 292–528 (SPEELIARIM…DLLLEMLDAH (237 aa)) is the NR LBD domain.

It belongs to the nuclear hormone receptor family. NR3 subfamily. Binds DNA as a homodimer. Can form a heterodimer with ER-alpha.

The protein localises to the nucleus. Binds estrogens with an affinity similar to that of ER-alpha, and activates expression of reporter genes containing estrogen response elements (ERE) in an estrogen-dependent manner. This Carassius auratus (Goldfish) protein is Estrogen receptor beta-1 (esr2a).